The following is a 446-amino-acid chain: tRNA-2-methylthio-N(6)-dimethylallyladenosine synthase (446 aa).

The 122-residue stretch at 3-124 (KKLYIKTYGC…LPELISKVVR (122 aa)) folds into the MTTase N-terminal domain. C12, C48, C87, C162, C166, and C169 together coordinate [4Fe-4S] cluster. A Radical SAM core domain is found at 148 to 380 (YPQGASAFIS…QKELSSQQLA (233 aa)). The TRAM domain occupies 383-446 (ESCVGSTMKV…SNSLTGEIYT (64 aa)).

The protein belongs to the methylthiotransferase family. MiaB subfamily. In terms of assembly, monomer. [4Fe-4S] cluster is required as a cofactor.

It is found in the cytoplasm. It carries out the reaction N(6)-dimethylallyladenosine(37) in tRNA + (sulfur carrier)-SH + AH2 + 2 S-adenosyl-L-methionine = 2-methylsulfanyl-N(6)-dimethylallyladenosine(37) in tRNA + (sulfur carrier)-H + 5'-deoxyadenosine + L-methionine + A + S-adenosyl-L-homocysteine + 2 H(+). Its function is as follows. Catalyzes the methylthiolation of N6-(dimethylallyl)adenosine (i(6)A), leading to the formation of 2-methylthio-N6-(dimethylallyl)adenosine (ms(2)i(6)A) at position 37 in tRNAs that read codons beginning with uridine. The sequence is that of tRNA-2-methylthio-N(6)-dimethylallyladenosine synthase from Rickettsia canadensis (strain McKiel).